The chain runs to 185 residues: Ribosome-recycling factor (185 aa).

Belongs to the RRF family.

The protein localises to the cytoplasm. Functionally, responsible for the release of ribosomes from messenger RNA at the termination of protein biosynthesis. May increase the efficiency of translation by recycling ribosomes from one round of translation to another. The chain is Ribosome-recycling factor from Shewanella frigidimarina (strain NCIMB 400).